A 95-amino-acid polypeptide reads, in one-letter code: Small ribosomal subunit protein bS6 (95 aa).

This sequence belongs to the bacterial ribosomal protein bS6 family. In terms of assembly, part of the 30S ribosomal subunit.

Functionally, binds together with bS18 to 16S ribosomal RNA. In Bacillus subtilis (strain 168), this protein is Small ribosomal subunit protein bS6 (rpsF).